We begin with the raw amino-acid sequence, 556 residues long: Formate--tetrahydrofolate ligase (556 aa).

An ATP-binding site is contributed by 65-72 (TPAGEGKS).

It belongs to the formate--tetrahydrofolate ligase family.

The enzyme catalyses (6S)-5,6,7,8-tetrahydrofolate + formate + ATP = (6R)-10-formyltetrahydrofolate + ADP + phosphate. It functions in the pathway one-carbon metabolism; tetrahydrofolate interconversion. This Streptococcus equi subsp. zooepidemicus (strain MGCS10565) protein is Formate--tetrahydrofolate ligase.